The primary structure comprises 595 residues: Probable carotenoid cleavage dioxygenase 4, chloroplastic (595 aa).

The N-terminal 34 residues, 1–34, are a transit peptide targeting the chloroplast; it reads MDSVSSSSFLSSTFSLHHSLLRRRSSSPTLLRIN. The interval 41-74 is disordered; the sequence is RSPITNPSDNNDRRNKPKTLHNRTNHTLVSSPPK. Residues 55–64 are compositionally biased toward basic residues; sequence NKPKTLHNRT. Fe cation-binding residues include histidine 287, histidine 336, histidine 404, and histidine 583.

It belongs to the carotenoid oxygenase family. Interacts with VAR3. Interacts with PGM48. Requires Fe(2+) as cofactor. In terms of tissue distribution, mostly expressed in flowers (e.g. sepals and petals), siliques, seeds, leaves and cotyledons.

The protein localises to the plastid. It is found in the chloroplast. It localises to the plastoglobule. In terms of biological role, may be involved in carotenoid cleavage. The protein is Probable carotenoid cleavage dioxygenase 4, chloroplastic (CCD4) of Arabidopsis thaliana (Mouse-ear cress).